An 85-amino-acid chain; its full sequence is Cell division topological specificity factor (85 aa).

It belongs to the MinE family.

In terms of biological role, prevents the cell division inhibition by proteins MinC and MinD at internal division sites while permitting inhibition at polar sites. This ensures cell division at the proper site by restricting the formation of a division septum at the midpoint of the long axis of the cell. The polypeptide is Cell division topological specificity factor (Stutzerimonas stutzeri (strain A1501) (Pseudomonas stutzeri)).